The sequence spans 774 residues: 1,4-alpha-glucan branching enzyme GlgB (774 aa).

The active-site Nucleophile is D440. Residue E493 is the Proton donor of the active site.

Belongs to the glycosyl hydrolase 13 family. GlgB subfamily. Monomer.

It carries out the reaction Transfers a segment of a (1-&gt;4)-alpha-D-glucan chain to a primary hydroxy group in a similar glucan chain.. Its pathway is glycan biosynthesis; glycogen biosynthesis. Catalyzes the formation of the alpha-1,6-glucosidic linkages in glycogen by scission of a 1,4-alpha-linked oligosaccharide from growing alpha-1,4-glucan chains and the subsequent attachment of the oligosaccharide to the alpha-1,6 position. This chain is 1,4-alpha-glucan branching enzyme GlgB (glgB), found in Synechococcus elongatus (strain ATCC 33912 / PCC 7942 / FACHB-805) (Anacystis nidulans R2).